A 169-amino-acid chain; its full sequence is Glutathione peroxidase (169 aa).

Residue Sec43 is part of the active site. Residue Sec43 is a non-standard amino acid, selenocysteine.

Belongs to the glutathione peroxidase family.

It carries out the reaction 2 glutathione + H2O2 = glutathione disulfide + 2 H2O. The protein is Glutathione peroxidase (GPX1) of Schistosoma mansoni (Blood fluke).